A 257-amino-acid chain; its full sequence is Snake venom serine protease KN1 (257 aa).

Positions 1–18 are cleaved as a signal peptide; that stretch reads MVLIRVLANLLILQLSYA. Positions 19–24 are excised as a propeptide; that stretch reads QKSSEL. One can recognise a Peptidase S1 domain in the interval 25–248; that stretch reads VVGGHPCNIN…HLDWIKSIIA (224 aa). 5 disulfides stabilise this stretch: cysteine 31–cysteine 162, cysteine 49–cysteine 65, cysteine 141–cysteine 209, cysteine 173–cysteine 188, and cysteine 199–cysteine 224. The active-site Charge relay system is histidine 64. Asparagine 102 carries N-linked (GlcNAc...) asparagine glycosylation. The active-site Charge relay system is the aspartate 109. Asparagine 120 and asparagine 121 each carry an N-linked (GlcNAc...) asparagine glycan. The active-site Charge relay system is the serine 203.

The protein belongs to the peptidase S1 family. Snake venom subfamily. Monomer. As to expression, expressed by the venom gland.

It is found in the secreted. Functionally, snake venom serine protease that may act in the hemostasis system of the prey. This chain is Snake venom serine protease KN1, found in Trimeresurus stejnegeri (Chinese green tree viper).